A 133-amino-acid polypeptide reads, in one-letter code: Triatox (133 aa).

The signal sequence occupies residues 1-22 (MTTLRVLLAVCCAAYCILAEDV). A CUB domain is found at 23-125 (TVPANGELKL…RAMCTVYSAE (103 aa)). A disulfide bond links cysteine 70 and cysteine 86.

Belongs to the venom CUB family. As to expression, expressed by the venom gland.

The protein localises to the secreted. In terms of biological role, may function as an antimicrobial peptide and may be related to the innate defense of the insect in the salivary glands. The polypeptide is Triatox (Triatoma infestans (Assassin bug)).